The sequence spans 1122 residues: Adhesin P1 (1122 aa).

Positions 1–30 (MKKLIFKLSVGITPLALIGLGSFGLAVSGA) are cleaved as a signal peptide. Disordered regions lie at residues 183–209 (AGDT…GGAV), 244–273 (DYNS…GGRT), and 544–563 (QNSG…NGNE). Residues 195–208 (AGGGSGSSAAGGGA) are compositionally biased toward gly residues. Residues 259–273 (LDSSESSESINGGRT) are compositionally biased toward polar residues. A helical membrane pass occupies residues 997–1021 (VLPVAISIPIIIIALALALGLGIGI). Positions 1066–1122 (KTPQMLQANKKDGASSPSKPSAPAAKKPTGPTKPSAPGAKPTAPAKPKAPAPTKKIE) are disordered. The span at 1079 to 1122 (ASSPSKPSAPAAKKPTGPTKPSAPGAKPTAPAKPKAPAPTKKIE) shows a compositional bias: low complexity.

Belongs to the adhesin P1 family.

The protein resides in the cell membrane. In terms of biological role, could be involved in cytadherence. In Mycoplasmoides gallisepticum (Mycoplasma gallisepticum), this protein is Adhesin P1 (gapA).